The following is a 779-amino-acid chain: 3-isopropylmalate dehydratase (779 aa).

Positions 360, 421, and 424 each coordinate [4Fe-4S] cluster. A disordered region spans residues 484–518 (QDQSSPKVEVTSEDEKELESAAYDHAEPVQPEDAP). At Ser-488 the chain carries Phosphoserine. Thr-494 bears the Phosphothreonine mark. The residue at position 495 (Ser-495) is a Phosphoserine. The span at 501-510 (LESAAYDHAE) shows a compositional bias: basic and acidic residues.

Belongs to the aconitase/IPM isomerase family. In terms of assembly, monomer. [4Fe-4S] cluster serves as cofactor.

It carries out the reaction (2R,3S)-3-isopropylmalate = (2S)-2-isopropylmalate. The protein operates within amino-acid biosynthesis; L-leucine biosynthesis; L-leucine from 3-methyl-2-oxobutanoate: step 2/4. Catalyzes the isomerization between 2-isopropylmalate and 3-isopropylmalate, via the formation of 2-isopropylmaleate. The polypeptide is 3-isopropylmalate dehydratase (LEU1) (Saccharomyces cerevisiae (strain ATCC 204508 / S288c) (Baker's yeast)).